A 4743-amino-acid polypeptide reads, in one-letter code: Apolipoprotein B-100 (4743 aa).

The signal sequence occupies residues 1 to 27; that stretch reads MGPQRPALRAPLLLLFLLLFLDTSVWA. Residues 29 to 113 are heparin-binding; the sequence is DATRFKHLRK…KNSEEFASAM (85 aa). A Vitellogenin domain is found at 33–660; it reads FKHLRKYVYS…PSSYLPKESM (628 aa). A disulfide bridge connects residues C65 and C84. N-linked (GlcNAc...) asparagine glycosylation is present at N172. 4 disulfide bridges follow: C173/C199, C232/C248, C372/C377, and C466/C501. The segment at 219 to 293 is heparin-binding; the sequence is VRPLSTLISS…RFFRGGINQV (75 aa). The segment at 890–947 is heparin-binding; sequence NTNFFHESGLEARVALKAGQLKVIIPSPKRPVKLFSGSNTLHLVSTTKTEVIPPLIEN. An intrachain disulfide couples C954 to C964. N-linked (GlcNAc...) asparagine glycosylation is found at N971, N1336, N1345, and N1491. Residue K1973 is modified to N6-acetyllysine. Residue S2006 is modified to Phosphoserine. The heparin-binding stretch occupies residues 2010–2145; sequence NDAFDEPREF…EKLSQLETYA (136 aa). N-linked (GlcNAc...) asparagine glycosylation is found at N2094, N2522, N2662, N2741, N2791, N2897, N2944, and N3063. Residues 3123–3198 are heparin-binding; that stretch reads FLKTTKQSFD…KIKFDKYKTE (76 aa). Residues 3136-3146 are basic (possible receptor binding region); it reads KAQYKKNRDKH. N-linked (GlcNAc...) asparagine glycosylation is found at N3186, N3299, and N3321. Positions 3336–3356 are LDL receptor binding; sequence VTDALQYKLEGTSRLMRKKVL. Residues 3346 to 3479 are heparin-binding; sequence GTSRLMRKKV…QEYSGSVANE (134 aa). A basic (possible receptor binding region) region spans residues 3349–3357; it reads RLMRKKVLK. N3428, N3715, and N3828 each carry an N-linked (GlcNAc...) asparagine glycan. S3981 carries the post-translational modification Phosphoserine. At T3985 the chain carries Phosphothreonine. N-linked (GlcNAc...) asparagine glycans are attached at residues N4203 and N4232.

Interacts with PCSK9. Interacts with MTTP. Interacts with AUP1. Interacts with CIDEB. Post-translationally, palmitoylated; structural requirement for proper assembly of the hydrophobic core of the lipoprotein particle. In terms of tissue distribution, detected in intestine and liver (at protein level).

It is found in the cytoplasm. It localises to the secreted. The protein localises to the lipid droplet. Functionally, apolipoprotein B is a major protein constituent of chylomicrons (apo B-48), LDL (apo B-100) and VLDL (apo B-100). Apo B-100 functions as a recognition signal for the cellular binding and internalization of LDL particles by the apoB/E receptor. The chain is Apolipoprotein B-100 (Apob) from Rattus norvegicus (Rat).